The primary structure comprises 383 residues: MSDVVNLLDFDAQGLLAYCESLGEKSFRAKQLQRWIHQSGASEFGEMTDLAKSLREKLATRANIQAPAVISDHLSSDGTRKWLVDVGQGNAVETVYIPEETRGTLCVSSQAGCAVNCRFCSTGKQGFSRNLSTGEIIGQLWMAEFAMRKQLGRGPKDDRVITNVVMMGMGEPLLNYDAVVPALALMLDDNAYGLSRRRVTVSTSGVVPMMDRLARDVPVALAVSLHASNDALRDVLVPLNKKYPLAELMAACRRYLEFAPRDFITFEYCMLDGVNDTVEHARELLRVVADVPCKFNLIPFNPFPESGLKRSNNEQIRRFSQVLLDAGIVTTIRKTRGDDIDAACGQLAGEVKDRTRLAERGKFGKIVEIPVVGADSTHRMGTA.

E93 serves as the catalytic Proton acceptor. The Radical SAM core domain occupies 99 to 339 (EETRGTLCVS…TTIRKTRGDD (241 aa)). A disulfide bridge connects residues C106 and C344. C113, C117, and C120 together coordinate [4Fe-4S] cluster. Residues 170–171 (GE), S202, 224–226 (SLH), and N301 each bind S-adenosyl-L-methionine. The active-site S-methylcysteine intermediate is the C344.

Belongs to the radical SAM superfamily. RlmN family. The cofactor is [4Fe-4S] cluster.

The protein resides in the cytoplasm. The catalysed reaction is adenosine(2503) in 23S rRNA + 2 reduced [2Fe-2S]-[ferredoxin] + 2 S-adenosyl-L-methionine = 2-methyladenosine(2503) in 23S rRNA + 5'-deoxyadenosine + L-methionine + 2 oxidized [2Fe-2S]-[ferredoxin] + S-adenosyl-L-homocysteine. The enzyme catalyses adenosine(37) in tRNA + 2 reduced [2Fe-2S]-[ferredoxin] + 2 S-adenosyl-L-methionine = 2-methyladenosine(37) in tRNA + 5'-deoxyadenosine + L-methionine + 2 oxidized [2Fe-2S]-[ferredoxin] + S-adenosyl-L-homocysteine. Functionally, specifically methylates position 2 of adenine 2503 in 23S rRNA and position 2 of adenine 37 in tRNAs. m2A2503 modification seems to play a crucial role in the proofreading step occurring at the peptidyl transferase center and thus would serve to optimize ribosomal fidelity. In Ralstonia pickettii (strain 12J), this protein is Dual-specificity RNA methyltransferase RlmN.